A 337-amino-acid chain; its full sequence is Eukaryotic translation initiation factor 3 subunit H (337 aa).

An MPN domain is found at 21–153; the sequence is VQCDGLAVMK…LKAYRLTPQA (133 aa).

Belongs to the eIF-3 subunit H family. As to quaternary structure, component of the eukaryotic translation initiation factor 3 (eIF-3) complex. The eIF-3 complex interacts with pix. Interacts with mxt.

It is found in the cytoplasm. Component of the eukaryotic translation initiation factor 3 (eIF-3) complex, which is involved in protein synthesis of a specialized repertoire of mRNAs and, together with other initiation factors, stimulates binding of mRNA and methionyl-tRNAi to the 40S ribosome. The eIF-3 complex specifically targets and initiates translation of a subset of mRNAs involved in cell proliferation. The protein is Eukaryotic translation initiation factor 3 subunit H of Drosophila ananassae (Fruit fly).